The primary structure comprises 911 residues: Golgin IMH1 (911 aa).

Disordered regions lie at residues 16–41 (LAKG…SGLP) and 271–314 (KELP…ETVD). Residues 101 to 280 (FFQDLNNKNN…KELPKAISHQ (180 aa)) adopt a coiled-coil conformation. Over residues 286 to 299 (NRRKKNRNKGKKNK) the composition is skewed to basic residues. A phosphoserine mark is found at Ser308 and Ser660. Coiled-coil stretches lie at residues 312–735 (TVDN…ALKH) and 766–814 (SKAD…KERQ). A disordered region spans residues 814 to 850 (QYSDKSGRVSRSGSIGTLANANIDSSPANNSNPTKLE). Residues 822-847 (VSRSGSIGTLANANIDSSPANNSNPT) show a composition bias toward polar residues. The residue at position 827 (Ser827) is a Phosphoserine. Thr830 is subject to Phosphothreonine. Residues 861 to 909 (DSEKNEKIAYIKNVLLGFLEHKEQRNQLLPVISMLLQLDSTDEKRLVMS) form the GRIP domain.

In terms of assembly, forms oligomers and is present in high-molecular-mass complexes. Interacts with ARL1.

The protein localises to the cytoplasm. It is found in the golgi apparatus membrane. Involved in vesicular transport between an endosomal compartment and the Golgi apparatus. The sequence is that of Golgin IMH1 (IMH1) from Saccharomyces cerevisiae (strain ATCC 204508 / S288c) (Baker's yeast).